A 346-amino-acid chain; its full sequence is MSESTEITESSVEAAVEAALAAIAAAGDSEALKVVRHDHTAEGSPLAQLNAGIRSLPGDRKAAAGKLVGGARGRVSQALAAKEAGIAAAEEAAQLVAEAVDVTALPNRWTSGARHPLSLLQERIADVFVGMGWQVAEGPELESEWYNFDALNFDADHPARAMQDTFFVEPAEAHLVMRTHTSPVQLRALLGDELPVYRIASGRVFRTDEFDATHLPVFHQTEGIAVDKGLTMAHLRGTLDHFVETLFGEGARVRLRPNYFPFTEPSAELDLWHPTFAGGARWIEWGGCGMVNPNVLRSAGIDPEVYSGFAFGMGVERALMFRNDVKDMRDMAEGDVRFSQQFGMVV.

Mg(2+) is bound at residue glutamate 264.

This sequence belongs to the class-II aminoacyl-tRNA synthetase family. Phe-tRNA synthetase alpha subunit type 1 subfamily. Tetramer of two alpha and two beta subunits. Mg(2+) serves as cofactor.

Its subcellular location is the cytoplasm. The enzyme catalyses tRNA(Phe) + L-phenylalanine + ATP = L-phenylalanyl-tRNA(Phe) + AMP + diphosphate + H(+). This is Phenylalanine--tRNA ligase alpha subunit from Leifsonia xyli subsp. xyli (strain CTCB07).